A 199-amino-acid polypeptide reads, in one-letter code: Protein Thf1 (199 aa).

The stretch at 167-198 (QYSRVEKDISMYKSNIEKMKQALEIIALNLKT) forms a coiled coil.

Belongs to the THF1 family.

May be involved in photosynthetic membrane biogenesis. The protein is Protein Thf1 of Prochlorococcus marinus (strain NATL1A).